Here is a 417-residue protein sequence, read N- to C-terminus: Peptidyl-Asp metalloendopeptidase (417 aa).

The first 25 residues, 1–25, serve as a signal peptide directing secretion; sequence MLSRSIGKAAGGLVLGLSVAAAAHA. Residue histidine 327 participates in Zn(2+) binding. Glutamate 328 is a catalytic residue. Residues histidine 331 and histidine 337 each contribute to the Zn(2+) site.

Belongs to the peptidase M72 family. The cofactor is Zn(2+).

The enzyme catalyses Cleavage of Xaa-|-Asp, Xaa-|-Glu and Xaa-|-cysteic acid bonds.. Functionally, metalloprotease, specifically cleaves on the N-terminal side of aspartyl, glutamyl and cysteic acid residues. This chain is Peptidyl-Asp metalloendopeptidase, found in Stenotrophomonas maltophilia (strain R551-3).